Consider the following 334-residue polypeptide: Glyceraldehyde-3-phosphate dehydrogenase (334 aa).

NAD(+) is bound by residues 11 to 12 (RI), Asp-33, and Ser-119. Residues 149–151 (SCT) and Thr-180 contribute to the D-glyceraldehyde 3-phosphate site. The active-site Nucleophile is Cys-150. Asn-181 serves as a coordination point for NAD(+). Residues Arg-197, 210-211 (TG), and Arg-233 each bind D-glyceraldehyde 3-phosphate. Residue Asn-314 coordinates NAD(+).

It belongs to the glyceraldehyde-3-phosphate dehydrogenase family. In terms of assembly, homotetramer.

It is found in the cytoplasm. The catalysed reaction is D-glyceraldehyde 3-phosphate + phosphate + NAD(+) = (2R)-3-phospho-glyceroyl phosphate + NADH + H(+). It participates in carbohydrate degradation; glycolysis; pyruvate from D-glyceraldehyde 3-phosphate: step 1/5. In terms of biological role, catalyzes the oxidative phosphorylation of glyceraldehyde 3-phosphate (G3P) to 1,3-bisphosphoglycerate (BPG) using the cofactor NAD. The first reaction step involves the formation of a hemiacetal intermediate between G3P and a cysteine residue, and this hemiacetal intermediate is then oxidized to a thioester, with concomitant reduction of NAD to NADH. The reduced NADH is then exchanged with the second NAD, and the thioester is attacked by a nucleophilic inorganic phosphate to produce BPG. This is Glyceraldehyde-3-phosphate dehydrogenase (gap) from Clostridium acetobutylicum (strain ATCC 824 / DSM 792 / JCM 1419 / IAM 19013 / LMG 5710 / NBRC 13948 / NRRL B-527 / VKM B-1787 / 2291 / W).